We begin with the raw amino-acid sequence, 132 residues long: Keratin, high-sulfur matrix protein, IIIA3 (132 aa).

Its function is as follows. The keratin products of mammalian epidermal derivatives such as wool and hair consist of microfibrils embedded in a rigid matrix of other proteins. The matrix proteins include the high-sulfur and high-tyrosine keratins, having molecular weights of 6-20 kDa, whereas the microfibrils contain the larger, low-sulfur keratins (40-56 kDa). The protein is Keratin, high-sulfur matrix protein, IIIA3 of Capra hircus (Goat).